The sequence spans 426 residues: Histidine--tRNA ligase (426 aa).

The protein belongs to the class-II aminoacyl-tRNA synthetase family. Homodimer.

It localises to the cytoplasm. The enzyme catalyses tRNA(His) + L-histidine + ATP = L-histidyl-tRNA(His) + AMP + diphosphate + H(+). This is Histidine--tRNA ligase from Prochlorococcus marinus (strain AS9601).